Reading from the N-terminus, the 607-residue chain is V-type proton ATPase catalytic subunit A (607 aa).

246 to 253 is an ATP binding site; sequence GAFGCGKT.

This sequence belongs to the ATPase alpha/beta chains family. In terms of assembly, V-ATPase is a heteromultimeric enzyme composed of a peripheral catalytic V1 complex (components A to H) attached to an integral membrane V0 proton pore complex (components: a, c, c', c'', d, e, f and VOA1).

Its subcellular location is the vacuole membrane. The catalysed reaction is ATP + H2O + 4 H(+)(in) = ADP + phosphate + 5 H(+)(out). Functionally, catalytic subunit of the V1 complex of vacuolar(H+)-ATPase (V-ATPase), a multisubunit enzyme composed of a peripheral complex (V1) that hydrolyzes ATP and a membrane integral complex (V0) that translocates protons. V-ATPase is responsible for acidifying and maintaining the pH of intracellular compartments. The protein is V-type proton ATPase catalytic subunit A (vma-1) of Neurospora crassa (strain ATCC 24698 / 74-OR23-1A / CBS 708.71 / DSM 1257 / FGSC 987).